A 376-amino-acid chain; its full sequence is Protein RecA (376 aa).

79 to 86 is an ATP binding site; sequence GPESSGKT. The segment at 357–376 is disordered; it reads AAARAATDKPVETKGANAAA.

It belongs to the RecA family.

It localises to the cytoplasm. Its function is as follows. Can catalyze the hydrolysis of ATP in the presence of single-stranded DNA, the ATP-dependent uptake of single-stranded DNA by duplex DNA, and the ATP-dependent hybridization of homologous single-stranded DNAs. It interacts with LexA causing its activation and leading to its autocatalytic cleavage. The chain is Protein RecA from Synechococcus sp. (strain CC9902).